The primary structure comprises 758 residues: 5-methyltetrahydropteroyltriglutamate--homocysteine methyltransferase (758 aa).

Residues 16-19 and K116 each bind 5-methyltetrahydropteroyltri-L-glutamate; that span reads RELK. Residues 436-438 and E489 each bind L-homocysteine; that span reads IGS. L-methionine contacts are provided by residues 436–438 and E489; that span reads IGS. 5-methyltetrahydropteroyltri-L-glutamate-binding positions include 520 to 521 and W566; that span reads RC. D604 lines the L-homocysteine pocket. Residue D604 participates in L-methionine binding. E610 is a 5-methyltetrahydropteroyltri-L-glutamate binding site. Positions 646, 648, and 670 each coordinate Zn(2+). H699 (proton donor) is an active-site residue. Position 731 (C731) interacts with Zn(2+).

It belongs to the vitamin-B12 independent methionine synthase family. Zn(2+) serves as cofactor.

The catalysed reaction is 5-methyltetrahydropteroyltri-L-glutamate + L-homocysteine = tetrahydropteroyltri-L-glutamate + L-methionine. It participates in amino-acid biosynthesis; L-methionine biosynthesis via de novo pathway; L-methionine from L-homocysteine (MetE route): step 1/1. In terms of biological role, catalyzes the transfer of a methyl group from 5-methyltetrahydrofolate to homocysteine resulting in methionine formation. The protein is 5-methyltetrahydropteroyltriglutamate--homocysteine methyltransferase of Xylella fastidiosa (strain 9a5c).